A 155-amino-acid polypeptide reads, in one-letter code: 2-C-methyl-D-erythritol 2,4-cyclodiphosphate synthase (155 aa).

Positions 8 and 10 each coordinate a divalent metal cation. 4-CDP-2-C-methyl-D-erythritol 2-phosphate is bound by residues 8–10 (DVH) and 34–35 (HS). H42 is an a divalent metal cation binding site. 4-CDP-2-C-methyl-D-erythritol 2-phosphate is bound by residues 56–58 (DIG), 61–65 (FPDTD), 100–106 (AQAPKMA), 132–135 (TTTE), F139, and R142.

It belongs to the IspF family. Homotrimer. It depends on a divalent metal cation as a cofactor.

The catalysed reaction is 4-CDP-2-C-methyl-D-erythritol 2-phosphate = 2-C-methyl-D-erythritol 2,4-cyclic diphosphate + CMP. Its pathway is isoprenoid biosynthesis; isopentenyl diphosphate biosynthesis via DXP pathway; isopentenyl diphosphate from 1-deoxy-D-xylulose 5-phosphate: step 4/6. Involved in the biosynthesis of isopentenyl diphosphate (IPP) and dimethylallyl diphosphate (DMAPP), two major building blocks of isoprenoid compounds. Catalyzes the conversion of 4-diphosphocytidyl-2-C-methyl-D-erythritol 2-phosphate (CDP-ME2P) to 2-C-methyl-D-erythritol 2,4-cyclodiphosphate (ME-CPP) with a corresponding release of cytidine 5-monophosphate (CMP). The polypeptide is 2-C-methyl-D-erythritol 2,4-cyclodiphosphate synthase (Saccharophagus degradans (strain 2-40 / ATCC 43961 / DSM 17024)).